The following is a 352-amino-acid chain: GTPase Obg (352 aa).

Positions methionine 1–leucine 159 constitute an Obg domain. Positions alanine 160–proline 327 constitute an OBG-type G domain. Residues glycine 166–serine 173, phenylalanine 191–valine 195, aspartate 212–glycine 215, asparagine 279–aspartate 282, and serine 308–alanine 310 each bind GTP. Residues serine 173 and threonine 193 each coordinate Mg(2+). The segment at serine 329 to isoleucine 352 is disordered. The segment covering valine 339 to isoleucine 352 has biased composition (acidic residues).

The protein belongs to the TRAFAC class OBG-HflX-like GTPase superfamily. OBG GTPase family. As to quaternary structure, monomer. It depends on Mg(2+) as a cofactor.

The protein resides in the cytoplasm. Its function is as follows. An essential GTPase which binds GTP, GDP and possibly (p)ppGpp with moderate affinity, with high nucleotide exchange rates and a fairly low GTP hydrolysis rate. Plays a role in control of the cell cycle, stress response, ribosome biogenesis and in those bacteria that undergo differentiation, in morphogenesis control. The polypeptide is GTPase Obg (Erythrobacter litoralis (strain HTCC2594)).